The following is a 265-amino-acid chain: Flagellar brake protein YcgR (265 aa).

The 118-residue stretch at 135–252 folds into the PilZ domain; that stretch reads QRRESYRLET…DETIQRYIFR (118 aa).

This sequence belongs to the YcgR family. In terms of assembly, monomer. Interacts with the flagellar basal bodies.

The protein localises to the bacterial flagellum basal body. Functionally, acts as a flagellar brake, regulating swimming and swarming in a bis-(3'-5') cyclic diguanylic acid (c-di-GMP)-dependent manner. Binds 1 c-di-GMP dimer per subunit. Increasing levels of c-di-GMP lead to decreased motility. This is Flagellar brake protein YcgR from Xanthomonas campestris pv. campestris (strain B100).